We begin with the raw amino-acid sequence, 681 residues long: RNA polymerase sigma factor RpoD (681 aa).

Disordered stretches follow at residues 1-60 and 239-270; these read MKKK…ETAK and DDDENSVSDPKKDDDSEEDEENEERKKVVSEK. Residues 261-270 are compositionally biased toward basic and acidic residues; sequence EERKKVVSEK. A sigma-70 factor domain-2 region spans residues 446-516; it reads MAKSNLRLVV…SRAIADQART (71 aa). The Interaction with polymerase core subunit RpoC motif lies at 470–473; sequence DLIQ. Residues 525 to 601 form a sigma-70 factor domain-3 region; the sequence is DTINRINKVM…DKNIVSSIDH (77 aa). Residues 614–668 form a sigma-70 factor domain-4 region; the sequence is VLDQLNEREKAVIRMRFGLLDDESDRTLEEIGKELNVTRERVRQIESSAIKKLRS. The H-T-H motif DNA-binding region spans 641–660; that stretch reads LEEIGKELNVTRERVRQIES.

It belongs to the sigma-70 factor family. RpoD/SigA subfamily. As to quaternary structure, interacts transiently with the RNA polymerase catalytic core.

The protein localises to the cytoplasm. Its function is as follows. Sigma factors are initiation factors that promote the attachment of RNA polymerase to specific initiation sites and are then released. This sigma factor is the primary sigma factor during exponential growth. This chain is RNA polymerase sigma factor RpoD, found in Helicobacter pylori (strain J99 / ATCC 700824) (Campylobacter pylori J99).